We begin with the raw amino-acid sequence, 35 residues long: Manganese peroxidase (35 aa).

Positions 1–11 (LSLLGHDERVT) are enriched in basic and acidic residues. The segment at 1–35 (LSLLGHDERVTPEPFDSVTAQNARGNQADVQSLPR) is disordered. Positions 18-35 (VTAQNARGNQADVQSLPR) are enriched in polar residues.

Belongs to the peroxidase family. It depends on heme b as a cofactor. Requires Ca(2+) as cofactor.

It catalyses the reaction 2 Mn(2+) + H2O2 + 2 H(+) = 2 Mn(3+) + 2 H2O. In terms of biological role, has manganese peroxidase activity. The sequence is that of Manganese peroxidase from Irpex lacteus (Milk-white toothed polypore).